We begin with the raw amino-acid sequence, 220 residues long: Iron-sulfur cluster repair protein YtfE (220 aa).

The protein belongs to the RIC family. YtfE subfamily. As to quaternary structure, homodimer.

The protein localises to the cytoplasm. Functionally, di-iron-containing protein involved in the repair of iron-sulfur clusters damaged by oxidative and nitrosative stress conditions. This chain is Iron-sulfur cluster repair protein YtfE, found in Salmonella typhimurium (strain LT2 / SGSC1412 / ATCC 700720).